Reading from the N-terminus, the 34-residue chain is MSDIN-like toxin proprotein 7 (34 aa).

A propeptide spanning residues 1–10 is cleaved from the precursor; the sequence is MSDINATRLP. Residues 11-17 constitute a cross-link (cyclopeptide (Ala-Pro)); that stretch reads AWLTDCP. The propeptide occupies 18-34; it reads CVGDDVNRLLTRGESLC.

The protein belongs to the MSDIN fungal toxin family. Processed by the macrocyclase-peptidase enzyme POPB to yield a toxic cyclic heptapeptide. POPB first removes 10 residues from the N-terminus. Conformational trapping of the remaining peptide forces the enzyme to release this intermediate rather than proceed to macrocyclization. The enzyme rebinds the remaining peptide in a different conformation and catalyzes macrocyclization of the N-terminal 7 residues. As to expression, expressed in basidiocarps.

Probable toxin that belongs to the MSDIN-like toxin family responsible for a large number of food poisoning cases and deaths. The chain is MSDIN-like toxin proprotein 7 from Amanita exitialis (Guangzhou destroying angel).